The chain runs to 275 residues: Large ribosomal subunit protein uL2 (275 aa).

Disordered regions lie at residues 38 to 59 (TRGS…GGHK) and 223 to 275 (VAMN…RKRK). Residues 50 to 59 (TVRHRGGGHK) show a composition bias toward basic residues. Over residues 229–244 (DHPHGGGEGRTGEARE) the composition is skewed to basic and acidic residues.

It belongs to the universal ribosomal protein uL2 family. In terms of assembly, part of the 50S ribosomal subunit. Forms a bridge to the 30S subunit in the 70S ribosome.

Its function is as follows. One of the primary rRNA binding proteins. Required for association of the 30S and 50S subunits to form the 70S ribosome, for tRNA binding and peptide bond formation. It has been suggested to have peptidyltransferase activity; this is somewhat controversial. Makes several contacts with the 16S rRNA in the 70S ribosome. This is Large ribosomal subunit protein uL2 from Bordetella bronchiseptica (strain ATCC BAA-588 / NCTC 13252 / RB50) (Alcaligenes bronchisepticus).